The following is a 528-amino-acid chain: Homoserine O-acetyltransferase (528 aa).

The 186-residue stretch at 60 to 245 folds into the AB hydrolase-1 domain; it reads LVICHALTGS…AALLTYRSRD (186 aa). S154 serves as the catalytic Nucleophile. Disordered stretches follow at residues 250–335 and 388–413; these read RFGR…VKTQ and DLSA…DATE. A compositionally biased stretch (polar residues) spans 273–282; sequence QETTDPSVPS. Residues 295–304 are compositionally biased toward basic and acidic residues; the sequence is AWREHNDGHR. The span at 389-409 shows a compositional bias: low complexity; it reads LSAPSRDTSLSSLSSGLPSSP. Active-site residues include D438 and H467.

This sequence belongs to the AB hydrolase superfamily. MetX family.

The protein resides in the cytoplasm. It carries out the reaction L-homoserine + acetyl-CoA = O-acetyl-L-homoserine + CoA. It participates in amino-acid biosynthesis; L-methionine biosynthesis via de novo pathway; O-acetyl-L-homoserine from L-homoserine: step 1/1. Inhibited by 6-carbamoyl-3a,4,5,9b-tetrahydro-3H-cyclopenta[ c]quinoline-4-carboxylic acid (CTCQC). Commits homoserine to the methionine biosynthesis pathway by catalyzing its O-acetylation. This chain is Homoserine O-acetyltransferase, found in Cryptococcus neoformans var. grubii serotype A (strain H99 / ATCC 208821 / CBS 10515 / FGSC 9487) (Filobasidiella neoformans var. grubii).